The sequence spans 520 residues: GMP synthase [glutamine-hydrolyzing] (520 aa).

The Glutamine amidotransferase type-1 domain occupies 9–202; it reads SVLIVDFGSQ…IHNVAGIKGD (194 aa). The active-site Nucleophile is the cysteine 86. Residues histidine 176 and glutamate 178 contribute to the active site. Residues 203–395 enclose the GMPS ATP-PPase domain; the sequence is WSMSAYRQKA…LGLPDSFIGR (193 aa). 230 to 236 contacts ATP; it reads SGGVDSS.

In terms of assembly, homodimer.

It catalyses the reaction XMP + L-glutamine + ATP + H2O = GMP + L-glutamate + AMP + diphosphate + 2 H(+). Its pathway is purine metabolism; GMP biosynthesis; GMP from XMP (L-Gln route): step 1/1. Its function is as follows. Catalyzes the synthesis of GMP from XMP. The sequence is that of GMP synthase [glutamine-hydrolyzing] from Rhizobium etli (strain ATCC 51251 / DSM 11541 / JCM 21823 / NBRC 15573 / CFN 42).